A 367-amino-acid polypeptide reads, in one-letter code: Phosphoribosylaminoimidazole-succinocarboxamide synthase (367 aa).

It belongs to the SAICAR synthetase family.

The catalysed reaction is 5-amino-1-(5-phospho-D-ribosyl)imidazole-4-carboxylate + L-aspartate + ATP = (2S)-2-[5-amino-1-(5-phospho-beta-D-ribosyl)imidazole-4-carboxamido]succinate + ADP + phosphate + 2 H(+). It functions in the pathway purine metabolism; IMP biosynthesis via de novo pathway; 5-amino-1-(5-phospho-D-ribosyl)imidazole-4-carboxamide from 5-amino-1-(5-phospho-D-ribosyl)imidazole-4-carboxylate: step 1/2. The chain is Phosphoribosylaminoimidazole-succinocarboxamide synthase from Aliivibrio salmonicida (strain LFI1238) (Vibrio salmonicida (strain LFI1238)).